The sequence spans 1065 residues: Exportin-T (1065 aa).

Belongs to the exportin family.

The protein resides in the nucleus. It localises to the cytoplasm. Functionally, tRNA nucleus export receptor which facilitates tRNA translocation across the nuclear pore complex. Involved in pre-tRNA splicing, probably by affecting the interaction of pre-tRNA with splicing endonuclease. This chain is Exportin-T (LOS1), found in Coprinopsis cinerea (strain Okayama-7 / 130 / ATCC MYA-4618 / FGSC 9003) (Inky cap fungus).